The primary structure comprises 203 residues: Small ribosomal subunit protein uS4c (203 aa).

Residues 15–43 (LGSLPGLTSKRPRSGSDLRNQSRSGKRSQ) are disordered. One can recognise an S4 RNA-binding domain in the interval 89–169 (MRLDNILFRL…LPKHLTLHSL (81 aa)).

The protein belongs to the universal ribosomal protein uS4 family. Part of the 30S ribosomal subunit. Contacts protein S5. The interaction surface between S4 and S5 is involved in control of translational fidelity.

It localises to the plastid. Its subcellular location is the chloroplast. One of the primary rRNA binding proteins, it binds directly to 16S rRNA where it nucleates assembly of the body of the 30S subunit. Functionally, with S5 and S12 plays an important role in translational accuracy. This Illicium oligandrum (Star anise) protein is Small ribosomal subunit protein uS4c (rps4).